The chain runs to 246 residues: 1-(5-phosphoribosyl)-5-[(5-phosphoribosylamino)methylideneamino] imidazole-4-carboxamide isomerase (246 aa).

The Proton acceptor role is filled by Asp-10. Asp-135 functions as the Proton donor in the catalytic mechanism.

This sequence belongs to the HisA/HisF family.

Its subcellular location is the cytoplasm. The enzyme catalyses 1-(5-phospho-beta-D-ribosyl)-5-[(5-phospho-beta-D-ribosylamino)methylideneamino]imidazole-4-carboxamide = 5-[(5-phospho-1-deoxy-D-ribulos-1-ylimino)methylamino]-1-(5-phospho-beta-D-ribosyl)imidazole-4-carboxamide. It functions in the pathway amino-acid biosynthesis; L-histidine biosynthesis; L-histidine from 5-phospho-alpha-D-ribose 1-diphosphate: step 4/9. The protein is 1-(5-phosphoribosyl)-5-[(5-phosphoribosylamino)methylideneamino] imidazole-4-carboxamide isomerase of Methanosarcina mazei (strain ATCC BAA-159 / DSM 3647 / Goe1 / Go1 / JCM 11833 / OCM 88) (Methanosarcina frisia).